An 85-amino-acid chain; its full sequence is V-type proton ATPase subunit f (85 aa).

Topologically, residues 1-10 are lumenal; that stretch reads MRPVVSTGKA. The chain crosses the membrane as a helical span at residues 11–31; it reads WCCTVLSAFGVVILSVIAHLF. The Cytoplasmic segment spans residues 32–54; sequence NTNHESFVGSINDPEDGPAVAHT. Residues 55 to 75 traverse the membrane as a helical segment; sequence VYLAALVYLVFFVFCGFQVYL. The Lumenal portion of the chain corresponds to 76–85; it reads ARRKPSIELR.

V-ATPase is a heteromultimeric enzyme composed of a peripheral catalytic V1 complex (components A to H) attached to an integral membrane V0 proton pore complex (components: a, c, c', c'', d, e, f and VOA1).

It localises to the endoplasmic reticulum membrane. The protein localises to the vacuole membrane. In terms of biological role, accessory component of the V0 complex of vacuolar(H+)-ATPase (V-ATPase), a multisubunit enzyme composed of a peripheral complex (V1) that hydrolyzes ATP and a membrane integral complex (V0) that translocates protons. V-ATPase is responsible for acidifying and maintaining the pH of intracellular compartments. The chain is V-type proton ATPase subunit f from Saccharomyces cerevisiae (strain ATCC 204508 / S288c) (Baker's yeast).